The primary structure comprises 227 residues: Threonine--tRNA ligase (227 aa).

Positions 1–120 are catalytic; sequence DIELKLSTRP…LIEHYEGAFP (120 aa).

The protein belongs to the class-II aminoacyl-tRNA synthetase family. Homodimer.

It localises to the cytoplasm. It catalyses the reaction tRNA(Thr) + L-threonine + ATP = L-threonyl-tRNA(Thr) + AMP + diphosphate + H(+). Its function is as follows. Catalyzes the attachment of threonine to tRNA(Thr) in a two-step reaction: L-threonine is first activated by ATP to form Thr-AMP and then transferred to the acceptor end of tRNA(Thr). Also edits incorrectly charged L-seryl-tRNA(Thr). This chain is Threonine--tRNA ligase, found in Pseudomonas syringae pv. syringae.